Consider the following 208-residue polypeptide: MVLDELISEFDRGLRSLTGISRMSRPVPVPADTPDVELTPAERTHAAGLMRVNHVGEVCAQALYQAQKLTARTASAKAMFEEAAREEEDHLAWTAHRLKELDSRPSLLNPLWYAGALAIGVAAGTLGDKVSLGFMAETERQVESHLEGHMSELPPTDTASRAIVDQMRIDEVKHGKAATDAGGIELPLPARMLMRAASKVMTSTAYYL.

Residues E57, E87, H90, E139, E171, and H174 each coordinate Fe cation.

Belongs to the COQ7 family. Requires Fe cation as cofactor.

Its subcellular location is the cell membrane. The catalysed reaction is a 5-methoxy-2-methyl-3-(all-trans-polyprenyl)benzene-1,4-diol + AH2 + O2 = a 3-demethylubiquinol + A + H2O. Its pathway is cofactor biosynthesis; ubiquinone biosynthesis. Catalyzes the hydroxylation of 2-nonaprenyl-3-methyl-6-methoxy-1,4-benzoquinol during ubiquinone biosynthesis. The chain is 3-demethoxyubiquinol 3-hydroxylase from Burkholderia cenocepacia (strain HI2424).